A 410-amino-acid chain; its full sequence is 3-phenylpropionate/cinnamic acid dioxygenase ferredoxin--NAD(+) reductase component (410 aa).

An FAD-binding site is contributed by 5-36 (TIIIVGGGQAAAMAAASLRQQGFTGELHLFSD). NAD(+) is bound at residue 146-184 (SVVIVGAGTIGLELAASATQRSAAQRSAAQRRCKVTVIE).

The protein belongs to the bacterial ring-hydroxylating dioxygenase ferredoxin reductase family. In terms of assembly, this dioxygenase system consists of four proteins: the two subunits of the hydroxylase component (HcaE and HcaF), a ferredoxin (HcaC) and a ferredoxin reductase (HcaD). FAD serves as cofactor.

It catalyses the reaction 2 reduced [2Fe-2S]-[ferredoxin] + NAD(+) + H(+) = 2 oxidized [2Fe-2S]-[ferredoxin] + NADH. It functions in the pathway aromatic compound metabolism; 3-phenylpropanoate degradation. Functionally, part of the multicomponent 3-phenylpropionate dioxygenase, that converts 3-phenylpropionic acid (PP) and cinnamic acid (CI) into 3-phenylpropionate-dihydrodiol (PP-dihydrodiol) and cinnamic acid-dihydrodiol (CI-dihydrodiol), respectively. This Shigella flexneri serotype 5b (strain 8401) protein is 3-phenylpropionate/cinnamic acid dioxygenase ferredoxin--NAD(+) reductase component.